The following is a 583-amino-acid chain: Hyaluronan synthase-related protein (583 aa).

The Cytoplasmic segment spans residues 1-29 (MENTTDPENIPVSKPKYPTIRRILSQTFR). The chain crosses the membrane as a helical span at residues 30–50 (ILLLFSITTAYVLGYQALCHQ). Topologically, residues 51–52 (GL) are extracellular. The helical transmembrane segment at 53-73 (LITFGLYGAAMLLHLLMQGIF) threads the bilayer. Topologically, residues 74 to 393 (ANLEIRRIEK…CNAQWWHQHH (320 aa)) are cytoplasmic. Residues 394–414 (IWMTYESATGIFFPFFVTAVL) form a helical membrane-spanning segment. The Extracellular portion of the chain corresponds to 415–425 (IRLMYSSSLCN). A helical transmembrane segment spans residues 426–446 (IVWLFLCIQIMSLLLSLYASW). The Cytoplasmic segment spans residues 447–457 (QSKKLSMVLMS). The chain crosses the membrane as a helical span at residues 458–478 (LYSTLYIIWLLPCQLVALLTI). The Extracellular portion of the chain corresponds to 479–497 (AKSDWGTSGRKKVVNNYVP). A helical transmembrane segment spans residues 498–518 (LFSLSIWAAVLLGGLCYSMYI). At 519 to 535 (GCRKDWSKPQANRELYH) the chain is on the cytoplasmic side. A helical membrane pass occupies residues 536-556 (LLYGCAGYMAYWVLMTVIYCV). Residues 557-583 (SGSCCKMRSQAVPQTHDITSLSVSLLV) are Extracellular-facing.

This sequence belongs to the NodC/HAS family.

It localises to the membrane. The protein is Hyaluronan synthase-related protein (has-rs) of Xenopus laevis (African clawed frog).